A 301-amino-acid chain; its full sequence is Acetylglutamate kinase (301 aa).

Substrate-binding positions include 68-69, arginine 90, and asparagine 195; that span reads GG.

It belongs to the acetylglutamate kinase family. ArgB subfamily.

Its subcellular location is the cytoplasm. It catalyses the reaction N-acetyl-L-glutamate + ATP = N-acetyl-L-glutamyl 5-phosphate + ADP. It participates in amino-acid biosynthesis; L-arginine biosynthesis; N(2)-acetyl-L-ornithine from L-glutamate: step 2/4. Functionally, catalyzes the ATP-dependent phosphorylation of N-acetyl-L-glutamate. This chain is Acetylglutamate kinase, found in Pseudomonas paraeruginosa (strain DSM 24068 / PA7) (Pseudomonas aeruginosa (strain PA7)).